Reading from the N-terminus, the 430-residue chain is Tol-Pal system protein TolB (430 aa).

Residues 1–21 (MKQALRVAFGFLMLWAAVLHA) form the signal peptide.

Belongs to the TolB family. The Tol-Pal system is composed of five core proteins: the inner membrane proteins TolA, TolQ and TolR, the periplasmic protein TolB and the outer membrane protein Pal. They form a network linking the inner and outer membranes and the peptidoglycan layer.

It is found in the periplasm. Functionally, part of the Tol-Pal system, which plays a role in outer membrane invagination during cell division and is important for maintaining outer membrane integrity. TolB occupies a key intermediary position in the Tol-Pal system because it communicates directly with both membrane-embedded components, Pal in the outer membrane and TolA in the inner membrane. This Salmonella choleraesuis (strain SC-B67) protein is Tol-Pal system protein TolB.